We begin with the raw amino-acid sequence, 471 residues long: Coagulation factor IX (471 aa).

The first 19 residues, 1–19, serve as a signal peptide directing secretion; the sequence is MAKIPLILSFCLLEAFLGA. Residues 20-39 constitute a propeptide that is removed on maturation; that stretch reads ESTVFIENKEASTVLSRTRR. Positions 40-85 constitute a Gla domain; it reads GNSNRLEELIPGNLERECIEEKCSFEEAREVFENTEKTMEFWKIYI. Asparagine 41, glutamate 46, glutamate 47, glutamate 54, glutamate 56, glutamate 59, glutamate 60, glutamate 65, glutamate 66, and glutamate 69 together coordinate Ca(2+). 12 positions are modified to 4-carboxyglutamate: glutamate 46, glutamate 47, glutamate 54, glutamate 56, glutamate 59, glutamate 60, glutamate 65, glutamate 66, glutamate 69, glutamate 72, glutamate 75, and glutamate 79. Glutamate 54 provides a ligand contact to Mg(2+). An intrachain disulfide couples cysteine 57 to cysteine 62. Glutamate 59 serves as a coordination point for Mg(2+). Glutamate 65 contacts Mg(2+). Residue glutamate 69 coordinates Mg(2+). Ca(2+)-binding residues include glutamate 75, glutamate 79, aspartate 86, glycine 87, and glutamine 89. Mg(2+) is bound by residues glutamate 75 and glutamate 79. The 37-residue stretch at 86-122 folds into the EGF-like 1; calcium-binding domain; that stretch reads DGDQCNSNPCKNGAVCKDGVSSYECMCPPGYGGRNCE. 10 cysteine pairs are disulfide-bonded: cysteine 90-cysteine 101, cysteine 95-cysteine 110, cysteine 112-cysteine 121, cysteine 127-cysteine 138, cysteine 134-cysteine 148, cysteine 150-cysteine 163, cysteine 171-cysteine 345, cysteine 262-cysteine 278, cysteine 392-cysteine 406, and cysteine 417-cysteine 445. O-linked (Glc...) serine glycosylation occurs at serine 92. A Ca(2+)-binding site is contributed by aspartate 103. A (3R)-3-hydroxyaspartate modification is found at aspartate 103. A Phosphoserine modification is found at serine 107. Positions 123–164 constitute an EGF-like 2 domain; the sequence is IDSTCATKNGGCEHFCRHDTPQKAVCSCASGYKLHEDGKSCK. Residues 186–235 constitute a propeptide, activation peptide; that stretch reads TENTIERWNITAHDEGDAHDEALDITEPPPPPTTSAAPAKIVPITKNDTR. The Peptidase S1 domain maps to 236 to 469; that stretch reads VVGGYDSVKG…YVKWIRETTR (234 aa). Histidine 277 serves as the catalytic Charge relay system. Ca(2+) is bound by residues glutamate 291, asparagine 293, glutamate 296, and glutamate 301. Catalysis depends on aspartate 325, which acts as the Charge relay system. Serine 421 acts as the Charge relay system in catalysis.

It belongs to the peptidase S1 family. Heterodimer of a light chain and a heavy chain; disulfide-linked. Post-translationally, activated by factor XIa, which excises the activation peptide. The propeptide can also be removed by snake venom protease. Activated by coagulation factor VIIa-tissue factor (F7-F3) complex in calcium-dependent manner. The iron and 2-oxoglutarate dependent 3-hydroxylation of aspartate and asparagine is (R) stereospecific within EGF domains.

It is found in the secreted. The enzyme catalyses Selective cleavage of Arg-|-Ile bond in factor X to form factor Xa.. Functionally, factor IX is a vitamin K-dependent plasma protein that participates in the intrinsic pathway of blood coagulation by converting factor X to its active form in the presence of Ca(2+) ions, phospholipids, and factor VIIIa. The polypeptide is Coagulation factor IX (F9) (Gallus gallus (Chicken)).